Reading from the N-terminus, the 97-residue chain is Putative mitochondrial import inner membrane translocase subunit Tim8 A-B (97 aa).

The short motif at 43 to 66 is the Twin CX3C motif element; it reads CWEKCMDKPGPRLDGRAELCLVNC. Disulfide bonds link Cys43–Cys66 and Cys47–Cys62.

Belongs to the small Tim family. As to quaternary structure, heterohexamer; possibly composed of 3 copies of TIMM8AB and 3 copies of TIMM13.

It is found in the mitochondrion inner membrane. In terms of biological role, putative mitochondrial intermembrane chaperone that participates in the import and insertion of some multi-pass transmembrane proteins into the mitochondrial inner membrane. Also required for the transfer of beta-barrel precursors from the TOM complex to the sorting and assembly machinery (SAM complex) of the outer membrane. Acts as a chaperone-like protein that protects the hydrophobic precursors from aggregation and guide them through the mitochondrial intermembrane space. This chain is Putative mitochondrial import inner membrane translocase subunit Tim8 A-B (Timm8a2), found in Mus musculus (Mouse).